A 145-amino-acid chain; its full sequence is UPF0735 ACT domain-containing protein CPR_1404 (145 aa).

Residues 69–144 (IFNMVVTHEK…GVEKVEFVAM (76 aa)) form the ACT domain.

This sequence belongs to the UPF0735 family.

The chain is UPF0735 ACT domain-containing protein CPR_1404 from Clostridium perfringens (strain SM101 / Type A).